Consider the following 1521-residue polypeptide: Protein dispatched homolog 1 (1521 aa).

Residues 1-10 are compositionally biased toward polar residues; it reads MAVISGSDSV. The segment at 1–55 is disordered; the sequence is MAVISGSDSVLLSNGSISTSTSNPSPLSPSDGDLPAQHLGPRETPRTKASPNGCL. Residues 11–35 are compositionally biased toward low complexity; it reads LLSNGSISTSTSNPSPLSPSDGDLP. Asparagine 14 and asparagine 58 each carry an N-linked (GlcNAc...) asparagine glycan. Residues 189–209 form a helical membrane-spanning segment; sequence VVVLGMCTLLIVVCALVGVLV. A glycan (N-linked (GlcNAc...) asparagine) is linked at asparagine 390. Positions 485 to 657 constitute an SSD domain; the sequence is GIEFGIKHSL…VTWLPAVIVL (173 aa). 3 helical membrane passes run 499-519, 524-544, and 548-568; these read LLMD…IMCV, MFIT…SYFL, and VFNF…LVGI. N-linked (GlcNAc...) asparagine glycosylation is present at asparagine 581. A run of 8 helical transmembrane segments spans residues 603 to 623, 637 to 657, 717 to 737, 986 to 1006, 1008 to 1028, 1038 to 1058, 1081 to 1101, and 1109 to 1129; these read AALS…ANYV, GTAI…VIVL, YLWL…VCVN, MGLS…NIII, LYAI…LVLL, VTIS…GVAY, IAMA…STVL, and FMML…QCLC. 2 stretches are compositionally biased toward polar residues: residues 1355 to 1364 and 1418 to 1428; these read QENLGRTSTH and TKSKVSGLPNQ. The tract at residues 1355–1440 is disordered; that stretch reads QENLGRTSTH…KEEKQVEPSL (86 aa). Asparagine 1455 carries an N-linked (GlcNAc...) asparagine glycan.

The protein belongs to the dispatched family. In terms of assembly, interacts with SHH; via the cholesterol anchor of the dually lipid-modified SHH (ShhNp).

It is found in the membrane. Functions in hedgehog (Hh) signaling. Regulates the release and extracellular accumulation of cholesterol-modified hedgehog proteins and is hence required for effective production of the Hh signal. Synergizes with SCUBE2 to cause an increase in SHH secretion. This chain is Protein dispatched homolog 1 (Disp1), found in Mus musculus (Mouse).